We begin with the raw amino-acid sequence, 183 residues long: PLAT domain-containing protein 2 (183 aa).

An N-terminal signal peptide occupies residues 1 to 25 (MMPRRDVLFLSLLLVIATVSAVALA). One can recognise a PLAT domain in the interval 31 to 158 (CVYTFFLRTG…SPYELSAVRN (128 aa)).

The protein resides in the endoplasmic reticulum. Involved in response to abiotic stress. The chain is PLAT domain-containing protein 2 from Arabidopsis thaliana (Mouse-ear cress).